Here is a 101-residue protein sequence, read N- to C-terminus: Trp operon repressor homolog (101 aa).

The DNA-binding element occupies 59–82 (QREIQQNLNTSAATITRGSNMLKL).

It belongs to the TrpR family. Homodimer.

The protein localises to the cytoplasm. In terms of biological role, this protein is an aporepressor. When complexed with L-tryptophan it binds the operator region of the trp operon and prevents the initiation of transcription. The polypeptide is Trp operon repressor homolog (Mannheimia succiniciproducens (strain KCTC 0769BP / MBEL55E)).